Here is a 431-residue protein sequence, read N- to C-terminus: MQMFCYQCSQTANGTGCTEYGVCGKSPTVARLQDNLVFAIKGISAYYYHARELGYDDPEIAGFLDEALYSTLTNVNFDAQSFVEYALEAGRMNLKAMQLLKKAHIETYGEPTPVEVETGTKKGKGIIVTGHNLKALEELLKQVEGTNVYVYTHSEMLPAHGYPGLRKYKNLIGNLGKAWYDQRKLFAEYPVAILGTSNCVLIPSESYRDRMFTTSIARLPGVKHIDGYDYTEVIEKAKSLPDLEEKPGSYKLRTGFSTSVVVSLADKIKELVEAGKIKHFLVVGGCDVPFKRNEYYREFVQKLPKETVVITLACGKFRINDLDLGDIDGIPRLIDVGQCNDTIVAIEIAQALAKVFGVEVTELPLTLVLTWMEQKAVAILWTLLALGLKNIYVGPVLPAWVNEDILKVLTAEFGLKTISEPEKDIKEILKV.

[4Fe-4S] cluster-binding residues include C5, C8, C17, and C23. Hybrid [4Fe-2O-2S] cluster contacts are provided by H131, E155, C199, C286, C314, C339, E373, and K375. Residue C286 is modified to Cysteine persulfide.

It belongs to the HCP family. [4Fe-4S] cluster is required as a cofactor. It depends on hybrid [4Fe-2O-2S] cluster as a cofactor.

The protein localises to the cytoplasm. It catalyses the reaction A + NH4(+) + H2O = hydroxylamine + AH2 + H(+). In terms of biological role, catalyzes the reduction of hydroxylamine to form NH(3) and H(2)O. The polypeptide is Hydroxylamine reductase (Thermotoga maritima (strain ATCC 43589 / DSM 3109 / JCM 10099 / NBRC 100826 / MSB8)).